The chain runs to 396 residues: Phosphoglycerate kinase (396 aa).

Residues 23–25 (DFN), arginine 38, 61–64 (HMGK), arginine 122, and arginine 155 contribute to the substrate site. ATP-binding positions include lysine 206, glycine 296, glutamate 327, and 353–356 (GGDS).

Belongs to the phosphoglycerate kinase family. Monomer.

It is found in the cytoplasm. The catalysed reaction is (2R)-3-phosphoglycerate + ATP = (2R)-3-phospho-glyceroyl phosphate + ADP. The protein operates within carbohydrate degradation; glycolysis; pyruvate from D-glyceraldehyde 3-phosphate: step 2/5. The chain is Phosphoglycerate kinase from Clostridium botulinum (strain Alaska E43 / Type E3).